A 110-amino-acid chain; its full sequence is MLKILNMNEYISLNHYLILSSLVFTIGMFGLFMNRKNIINILMSIELMLLAVNINFVAFSVYMQELSGQIFSIIILTVAAAETAIGLAILLIYFRNKGSIKITDINKMRG.

Transmembrane regions (helical) follow at residues 13–33 (LNHY…GLFM), 41–61 (ILMS…AFSV), and 73–93 (IIIL…LLIY).

The protein belongs to the complex I subunit 4L family. NDH-1 is composed of 14 different subunits. Subunits NuoA, H, J, K, L, M, N constitute the membrane sector of the complex.

Its subcellular location is the cell inner membrane. It carries out the reaction a quinone + NADH + 5 H(+)(in) = a quinol + NAD(+) + 4 H(+)(out). NDH-1 shuttles electrons from NADH, via FMN and iron-sulfur (Fe-S) centers, to quinones in the respiratory chain. The immediate electron acceptor for the enzyme in this species is believed to be ubiquinone. Couples the redox reaction to proton translocation (for every two electrons transferred, four hydrogen ions are translocated across the cytoplasmic membrane), and thus conserves the redox energy in a proton gradient. The polypeptide is NADH-quinone oxidoreductase subunit K (Rickettsia prowazekii (strain Madrid E)).